The following is a 271-amino-acid chain: 5-deoxy-glucuronate isomerase (271 aa).

The protein belongs to the isomerase IolB family.

It catalyses the reaction 5-deoxy-D-glucuronate = 5-dehydro-2-deoxy-D-gluconate. It functions in the pathway polyol metabolism; myo-inositol degradation into acetyl-CoA; acetyl-CoA from myo-inositol: step 4/7. Its function is as follows. Involved in the isomerization of 5-deoxy-glucuronate (5DG) to 5-dehydro-2-deoxy-D-gluconate (DKG or 2-deoxy-5-keto-D-gluconate). The protein is 5-deoxy-glucuronate isomerase of Bacillus subtilis subsp. natto.